A 123-amino-acid chain; its full sequence is Venom peptide MmKTx1 (123 aa).

An N-terminal signal peptide occupies residues 1 to 21 (MSIKISAIALFMLSFTVFVNG).

The protein belongs to the scorpion La1-like peptide family. In terms of processing, contains 4 disulfide bonds. As to expression, expressed by the venom gland.

The protein resides in the secreted. The sequence is that of Venom peptide MmKTx1 from Olivierus martensii (Manchurian scorpion).